We begin with the raw amino-acid sequence, 178 residues long: FANCD2 opposite strand protein (178 aa).

The chain is FANCD2 opposite strand protein (Fancd2os) from Mus musculus (Mouse).